The primary structure comprises 277 residues: Odontogenic ameloblast-associated protein (277 aa).

The N-terminal stretch at 1-15 (MRTLILLGILGATMS) is a signal peptide. Residues 103-124 (TQAGQLDPSQPQTPQQTQRGPK) form a disordered region. Thr-115 carries O-linked (GalNAc...) threonine glycosylation. An interaction with ARHGEF5 region spans residues 127–129 (MPS). Residues Thr-208, Thr-248, and Thr-271 are each glycosylated (O-linked (GalNAc...) threonine).

Belongs to the ODAM family. In terms of assembly, interacts (via C-terminus) with ARHGEF5. Post-translationally, O-glycosylated.

It is found in the secreted. The protein resides in the cytoplasm. The protein localises to the nucleus. Its function is as follows. Tooth-associated epithelia protein that probably plays a role in odontogenesis, the complex process that results in the initiation and generation of the tooth. May be incorporated in the enamel matrix at the end of mineralization process. Involved in the induction of RHOA activity via interaction with ARHGEF and expression of downstream factors such as ROCK. Plays a role in attachment of the junctional epithelium to the tooth surface. The polypeptide is Odontogenic ameloblast-associated protein (ODAM) (Bos taurus (Bovine)).